The following is an 80-amino-acid chain: MAERSQNLQDLFLNTVRKQKISLTIFLINGVKLTGVVTSFDNFCVLLRRDGHSQLVYKHAISTIMPGQPMQMFESEEGAA.

The 61-residue stretch at 10–70 folds into the Sm domain; the sequence is DLFLNTVRKQ…ISTIMPGQPM (61 aa).

It belongs to the Hfq family. In terms of assembly, homohexamer.

In terms of biological role, RNA chaperone that binds small regulatory RNA (sRNAs) and mRNAs to facilitate mRNA translational regulation in response to envelope stress, environmental stress and changes in metabolite concentrations. Also binds with high specificity to tRNAs. The sequence is that of RNA-binding protein Hfq from Agrobacterium fabrum (strain C58 / ATCC 33970) (Agrobacterium tumefaciens (strain C58)).